Reading from the N-terminus, the 519-residue chain is Alkaline phosphatase, tissue-nonspecific isozyme (519 aa).

The signal sequence occupies residues 1–16; it reads MKAFLLTLLAQLCSAS. Asp59 is a Mg(2+) binding site. Zn(2+) contacts are provided by Asp59 and Ser109. Ser109 functions as the Phosphoserine intermediate in the catalytic mechanism. The cysteines at positions 138 and 200 are disulfide-linked. Asn139 carries N-linked (GlcNAc...) asparagine glycosylation. Thr172 contributes to the Mg(2+) binding site. Asn229 carries N-linked (GlcNAc...) asparagine glycosylation. Ca(2+) is bound at residue Glu234. Asn278 carries an N-linked (GlcNAc...) asparagine glycan. Residues Phe289 and Glu290 each contribute to the Ca(2+) site. N-linked (GlcNAc...) asparagine glycosylation occurs at Asn302. Asp305 lines the Ca(2+) pocket. Glu331 contacts Mg(2+). Zn(2+)-binding residues include Asp336, His340, Asp377, and His378. Residue Asn429 is glycosylated (N-linked (GlcNAc...) asparagine). His453 is a binding site for Zn(2+). Cys488 and Cys496 form a disulfide bridge. Residue Ser498 is the site of GPI-anchor amidated serine attachment. The propeptide at 499–519 is removed in mature form; sequence AARPAATATLLPVLLLLLLLC.

The protein belongs to the alkaline phosphatase family. In terms of assembly, homodimer. It depends on Mg(2+) as a cofactor. The cofactor is Zn(2+). Ca(2+) is required as a cofactor.

It is found in the cell membrane. It localises to the extracellular vesicle membrane. It catalyses the reaction a phosphate monoester + H2O = an alcohol + phosphate. The enzyme catalyses diphosphate + H2O = 2 phosphate + H(+). It carries out the reaction pyridoxal 5'-phosphate + H2O = pyridoxal + phosphate. The catalysed reaction is phosphoethanolamine + H2O = ethanolamine + phosphate. It catalyses the reaction ATP + H2O = ADP + phosphate + H(+). The enzyme catalyses ADP + H2O = AMP + phosphate + H(+). It carries out the reaction AMP + H2O = adenosine + phosphate. Its function is as follows. Alkaline phosphatase that metabolizes various phosphate compounds and plays a key role in skeletal mineralization and adaptive thermogenesis. Has broad substrate specificity and can hydrolyze a considerable variety of compounds: however, only a few substrates, such as diphosphate (inorganic pyrophosphate; PPi) and pyridoxal 5'-phosphate (PLP) are natural substrates. Plays an essential role in skeletal and dental mineralization via its ability to hydrolyze extracellular diphosphate, a potent mineralization inhibitor, to phosphate: it thereby promotes hydroxyapatite crystal formation and increases inorganic phosphate concentration. Catalyzes dephosphorylation of PLP to pyridoxal (PL), the transportable form of vitamin B6, in order to provide a sufficient amount of PLP in the brain, an essential cofactor for enzymes catalyzing the synthesis of diverse neurotransmitters. Additionally, also able to mediate ATP degradation in a stepwise manner to adenosine, thereby regulating the availability of ligands for purinergic receptors. Involved in the establishment and growth of feather germs. This is Alkaline phosphatase, tissue-nonspecific isozyme (ALPL) from Gallus gallus (Chicken).